The primary structure comprises 307 residues: Acetaldehyde dehydrogenase 2 (307 aa).

The active-site Acyl-thioester intermediate is Cys131. Residues 162–170 (SVGPGTRKN) and Asn273 contribute to the NAD(+) site.

It belongs to the acetaldehyde dehydrogenase family.

It carries out the reaction acetaldehyde + NAD(+) + CoA = acetyl-CoA + NADH + H(+). This Comamonas testosteroni (Pseudomonas testosteroni) protein is Acetaldehyde dehydrogenase 2 (aphF).